The sequence spans 153 residues: Large ribosomal subunit protein uL15 (153 aa).

Residues 21–41 (RGIGSGKGKTGGRGIKGQKSR) are disordered. Positions 23–35 (IGSGKGKTGGRGI) are enriched in gly residues.

This sequence belongs to the universal ribosomal protein uL15 family. In terms of assembly, part of the 50S ribosomal subunit.

Binds to the 23S rRNA. In Rickettsia massiliae (strain Mtu5), this protein is Large ribosomal subunit protein uL15.